A 570-amino-acid chain; its full sequence is Hydroxylamine reductase (570 aa).

Residues Cys5, Cys8, Cys17, and Cys23 each coordinate [4Fe-4S] cluster. Residues His266, Glu290, Cys334, Cys425, Cys453, Cys478, Glu513, and Lys515 each contribute to the hybrid [4Fe-2O-2S] cluster site. Cys425 is modified (cysteine persulfide).

Belongs to the HCP family. The cofactor is [4Fe-4S] cluster. Requires hybrid [4Fe-2O-2S] cluster as cofactor.

The protein localises to the cytoplasm. It carries out the reaction A + NH4(+) + H2O = hydroxylamine + AH2 + H(+). Functionally, catalyzes the reduction of hydroxylamine to form NH(3) and H(2)O. The polypeptide is Hydroxylamine reductase (Clostridium botulinum (strain Okra / Type B1)).